We begin with the raw amino-acid sequence, 305 residues long: MVTEFIFLGLSDSQELQTFLFMLFFVFYGGIVFGNLLIVITVVSDSHLHSPMYFLLANLSLIDLSLSSVTAPKMITDFFSQRKVISFKGCLVQIFLLHFFGGSEMVILIAMGFDRYIAICKPLHYTTIMCGNACVGIMAVAWGIGFLHSVSQLAFAVHLPFCGPNEVDSFYCDLPRVIKLACTDTYRLDIMVIANSGVLTVCSFVLLIISYTIILMTIQHCPLDKSSKALSTLTAHITVVLLFFGPCVFIYAWPFPIKSLDKFLAVFYSVITPLLNPIIYTLRNKDMKTAIRRLRKWDAHSSVKF.

At 1–18 the chain is on the extracellular side; sequence MVTEFIFLGLSDSQELQT. Residues 19-42 traverse the membrane as a helical segment; sequence FLFMLFFVFYGGIVFGNLLIVITV. At 43-50 the chain is on the cytoplasmic side; it reads VSDSHLHS. A helical membrane pass occupies residues 51-72; the sequence is PMYFLLANLSLIDLSLSSVTAP. The Extracellular portion of the chain corresponds to 73-93; sequence KMITDFFSQRKVISFKGCLVQ. A disulfide bond links Cys-90 and Cys-182. The chain crosses the membrane as a helical span at residues 94–113; it reads IFLLHFFGGSEMVILIAMGF. Topologically, residues 114–132 are cytoplasmic; sequence DRYIAICKPLHYTTIMCGN. The chain crosses the membrane as a helical span at residues 133-151; that stretch reads ACVGIMAVAWGIGFLHSVS. Topologically, residues 152-188 are extracellular; that stretch reads QLAFAVHLPFCGPNEVDSFYCDLPRVIKLACTDTYRL. Residues 189–212 traverse the membrane as a helical segment; that stretch reads DIMVIANSGVLTVCSFVLLIISYT. Residues 213–228 are Cytoplasmic-facing; sequence IILMTIQHCPLDKSSK. The helical transmembrane segment at 229-251 threads the bilayer; sequence ALSTLTAHITVVLLFFGPCVFIY. Residues 252–262 lie on the Extracellular side of the membrane; sequence AWPFPIKSLDK. The helical transmembrane segment at 263–282 threads the bilayer; it reads FLAVFYSVITPLLNPIIYTL. The Cytoplasmic segment spans residues 283-305; the sequence is RNKDMKTAIRRLRKWDAHSSVKF.

The protein belongs to the G-protein coupled receptor 1 family.

It is found in the cell membrane. Its function is as follows. Odorant receptor. This chain is Olfactory receptor 4F4 (OR4F4), found in Homo sapiens (Human).